Here is a 424-residue protein sequence, read N- to C-terminus: Histidine--tRNA ligase (424 aa).

It belongs to the class-II aminoacyl-tRNA synthetase family. As to quaternary structure, homodimer.

Its subcellular location is the cytoplasm. The catalysed reaction is tRNA(His) + L-histidine + ATP = L-histidyl-tRNA(His) + AMP + diphosphate + H(+). The chain is Histidine--tRNA ligase from Salmonella dublin (strain CT_02021853).